The primary structure comprises 562 residues: MRLRLRLLALLLLLLAPPARAPKPSAQDVSLGVDWLTRYGYLPPPHPAQAQLQSPEKLRDAIKVMQRFAGLPETGRMDPGTVATMRKPRCSLPDVLGVAGLVRRRRRYALSGSVWKKRTLTWRVRSFPQSSQLSQETVRVLMSYALMAWGMESGLTFHEVDSPQGQEPDILIDFARAFHQDSYPFDGLGGTLAHAFFPGEHPISGDTHFDDEETWTFGSKDGEGTDLFAVAVHEFGHALGLGHSSAPNSIMRPFYQGPVGDPDKYRLSQDDRDGLQQLYGKAPQTPYDKPTRKPLAPPPQPPASPTHSPSFPIPDRCEGNFDAIANIRGETFFFKGPWFWRLQPSGQLVSPRPARLHRFWEGLPAQVRVVQAAYARHRDGRILLFSGPQFWVFQDRQLEGGARPLTELGLPPGEEVDAVFSWPQNGKTYLVRGRQYWRYDEAAARPDPGYPRDLSLWEGAPPSPDDVTVSNAGDTYFFKGAHYWRFPKNSIKTEPDAPQPMGPNWLDCPAPSSGPRAPRPPKATPVSETCDCQCELNQAAGRWPAPIPLLLLPLLVGGVASR.

Positions 1 to 21 (MRLRLRLLALLLLLLAPPARA) are cleaved as a signal peptide. Residues 22-107 (PKPSAQDVSL…VAGLVRRRRR (86 aa)) constitute a propeptide that is removed on maturation. Residues 88-95 (PRCSLPDV) carry the Cysteine switch motif. The Zn(2+) site is built by cysteine 90 and histidine 233. Residue glutamate 234 is part of the active site. 2 residues coordinate Zn(2+): histidine 237 and histidine 243. The disordered stretch occupies residues 278–313 (LYGKAPQTPYDKPTRKPLAPPPQPPASPTHSPSFPI). Residues 295 to 304 (LAPPPQPPAS) are compositionally biased toward pro residues. Hemopexin repeat units follow at residues 314–363 (PDRC…WEGL), 367–412 (VRVV…GLPP), 413–461 (GEEV…EGAP), and 462–508 (PSPD…WLDC). Cysteine 317 and cysteine 508 are joined by a disulfide. Residues 490 to 526 (SIKTEPDAPQPMGPNWLDCPAPSSGPRAPRPPKATPV) form a disordered region. Alanine 539 carries GPI-anchor amidated alanine lipidation. Residues 540 to 562 (AGRWPAPIPLLLLPLLVGGVASR) constitute a propeptide, removed in mature form.

This sequence belongs to the peptidase M10A family. Requires Zn(2+) as cofactor. It depends on Ca(2+) as a cofactor. Post-translationally, the precursor is cleaved by a furin endopeptidase. In terms of tissue distribution, expressed predominantly in leukocytes, lung and spleen. Expressed also in colon carcinoma, astrocytoma and glioblastomas.

The protein resides in the cell membrane. The protein localises to the secreted. Its subcellular location is the extracellular space. It localises to the extracellular matrix. In terms of biological role, may activate progelatinase A. This Homo sapiens (Human) protein is Matrix metalloproteinase-25 (MMP25).